Reading from the N-terminus, the 259-residue chain is Dihydroorotate dehydrogenase B (NAD(+)), electron transfer subunit (259 aa).

The FAD-binding FR-type domain occupies 2–102; it reads MQKQNMIVVN…LGPLGHGFPV (101 aa). FAD-binding positions include 53–56, 70–72, and 77–78; these read RPIS, LYR, and GT. Residues Cys-221, Cys-226, Cys-229, and Cys-246 each contribute to the [2Fe-2S] cluster site.

This sequence belongs to the PyrK family. Heterotetramer of 2 PyrK and 2 PyrD type B subunits. The cofactor is [2Fe-2S] cluster. FAD serves as cofactor.

The protein operates within pyrimidine metabolism; UMP biosynthesis via de novo pathway; orotate from (S)-dihydroorotate (NAD(+) route): step 1/1. Responsible for channeling the electrons from the oxidation of dihydroorotate from the FMN redox center in the PyrD type B subunit to the ultimate electron acceptor NAD(+). The polypeptide is Dihydroorotate dehydrogenase B (NAD(+)), electron transfer subunit (Bacillus mycoides (strain KBAB4) (Bacillus weihenstephanensis)).